Here is a 198-residue protein sequence, read N- to C-terminus: Guanylate kinase (198 aa).

The region spanning 6–192 is the Guanylate kinase-like domain; sequence KSIVIFTGPS…AAQEIREILH (187 aa). 13–20 is a binding site for ATP; the sequence is GPSGVGKG.

This sequence belongs to the guanylate kinase family.

It localises to the cytoplasm. The enzyme catalyses GMP + ATP = GDP + ADP. Functionally, essential for recycling GMP and indirectly, cGMP. In Mycoplasmopsis synoviae (strain 53) (Mycoplasma synoviae), this protein is Guanylate kinase.